The following is a 521-amino-acid chain: Apolipoprotein N-acyltransferase (521 aa).

6 helical membrane-spanning segments follow: residues 27-47, 64-84, 93-113, 125-145, 167-187, and 202-222; these read VLLA…IAFA, LGFV…TIVV, IVSV…PAVV, ISLL…RAFL, IADI…NVVL, and YPVK…AYGF. The CN hydrolase domain occupies 239–483; it reads IQGNIDQNIK…EAVLNGEVRL (245 aa). Glu281 acts as the Proton acceptor in catalysis. Lys344 is an active-site residue. The active-site Nucleophile is Cys394. A helical transmembrane segment spans residues 493-513; that stretch reads YGDVFAWACVAGAAVVAALAF.

This sequence belongs to the CN hydrolase family. Apolipoprotein N-acyltransferase subfamily.

Its subcellular location is the cell inner membrane. It catalyses the reaction N-terminal S-1,2-diacyl-sn-glyceryl-L-cysteinyl-[lipoprotein] + a glycerophospholipid = N-acyl-S-1,2-diacyl-sn-glyceryl-L-cysteinyl-[lipoprotein] + a 2-acyl-sn-glycero-3-phospholipid + H(+). It functions in the pathway protein modification; lipoprotein biosynthesis (N-acyl transfer). In terms of biological role, catalyzes the phospholipid dependent N-acylation of the N-terminal cysteine of apolipoprotein, the last step in lipoprotein maturation. The polypeptide is Apolipoprotein N-acyltransferase (Geobacter metallireducens (strain ATCC 53774 / DSM 7210 / GS-15)).